Here is a 387-residue protein sequence, read N- to C-terminus: 3-ketoacyl-CoA thiolase (387 aa).

Cys-91 serves as the catalytic Acyl-thioester intermediate. Active-site proton acceptor residues include His-343 and Cys-373.

The protein belongs to the thiolase-like superfamily. Thiolase family. In terms of assembly, heterotetramer of two alpha chains (FadB) and two beta chains (FadA).

The protein resides in the cytoplasm. It catalyses the reaction an acyl-CoA + acetyl-CoA = a 3-oxoacyl-CoA + CoA. The protein operates within lipid metabolism; fatty acid beta-oxidation. Catalyzes the final step of fatty acid oxidation in which acetyl-CoA is released and the CoA ester of a fatty acid two carbons shorter is formed. This is 3-ketoacyl-CoA thiolase from Shewanella frigidimarina (strain NCIMB 400).